The primary structure comprises 260 residues: Indole-3-glycerol phosphate synthase (260 aa).

The protein belongs to the TrpC family.

It catalyses the reaction 1-(2-carboxyphenylamino)-1-deoxy-D-ribulose 5-phosphate + H(+) = (1S,2R)-1-C-(indol-3-yl)glycerol 3-phosphate + CO2 + H2O. Its pathway is amino-acid biosynthesis; L-tryptophan biosynthesis; L-tryptophan from chorismate: step 4/5. The chain is Indole-3-glycerol phosphate synthase from Staphylococcus aureus (strain Mu3 / ATCC 700698).